The chain runs to 312 residues: Putative tricarboxylate transport protein, mitochondrial (312 aa).

Solcar repeat units follow at residues Glu23–Gln111, Val122–Trp208, and Ile218–Phe303. The next 6 membrane-spanning stretches (helical) occupy residues Ile29–Val49, Val75–Ile95, Leu126–Val146, Phe164–Val184, Pro221–Ile241, and Val286–Val306.

Belongs to the mitochondrial carrier (TC 2.A.29) family.

The protein localises to the mitochondrion inner membrane. Its function is as follows. Transport of citrate across inner mitochondrial membrane. This chain is Putative tricarboxylate transport protein, mitochondrial, found in Caenorhabditis elegans.